A 1038-amino-acid polypeptide reads, in one-letter code: Probable ubiquitin conjugation factor E4 (1038 aa).

Disordered regions lie at residues 430–459 (ANDA…ASGQ) and 1010–1038 (SHQS…MLID). Low complexity predominate over residues 446 to 459 (SKEATSSSSNASGQ). The 75-residue stretch at 940–1014 (EIPDEFLDPI…DEFVKSHQSK (75 aa)) folds into the U-box domain. Residues 1017–1028 (TSGEDSSNKERI) are compositionally biased toward basic and acidic residues. Over residues 1029-1038 (QTTNSDMLID) the composition is skewed to polar residues.

The protein belongs to the ubiquitin conjugation factor E4 family.

It is found in the cytoplasm. The protein localises to the nucleus. The enzyme catalyses S-ubiquitinyl-[E2 ubiquitin-conjugating enzyme]-L-cysteine + [acceptor protein]-L-lysine = [E2 ubiquitin-conjugating enzyme]-L-cysteine + N(6)-ubiquitinyl-[acceptor protein]-L-lysine.. The protein operates within protein modification; protein ubiquitination. In terms of biological role, ubiquitin-protein ligase that may function as an E3 ligase in conjunction with specific E1 and E2 ligases. May also function as an E4 ligase mediating the assembly of polyubiquitin chain assembly on substrates monoubiquitinated by another E3 ubiquitin ligase. This is Probable ubiquitin conjugation factor E4 (PUB1) from Arabidopsis thaliana (Mouse-ear cress).